The primary structure comprises 250 residues: 5-oxoprolinase subunit A (250 aa).

Belongs to the LamB/PxpA family. In terms of assembly, forms a complex composed of PxpA, PxpB and PxpC.

It carries out the reaction 5-oxo-L-proline + ATP + 2 H2O = L-glutamate + ADP + phosphate + H(+). Its function is as follows. Catalyzes the cleavage of 5-oxoproline to form L-glutamate coupled to the hydrolysis of ATP to ADP and inorganic phosphate. The protein is 5-oxoprolinase subunit A of Klebsiella pneumoniae (strain 342).